A 256-amino-acid polypeptide reads, in one-letter code: MAKIITFDDIDIEFKKLYEELSKQESYTTGVVYEVFNIFTLKSYIGKAHSYVKNGNQPVRRQGAKGRFYKHWKSCHNGENDCPIFYEALRNSDPQEWAVIILKVCSLKHLKEWETKMIERLDTSNPDKGYNYFVGDNKPNNPEYLVKYQSAKATSNAERAVSGALKKKAHNKDLPANINYRKKINKNGSIGEGYFVQIKIDGHLYNKAFLSGTMSMEAKLEAAKKTLEKFKQEAASKRAKRTKPSGSKTTRSTGRK.

The stretch at 213 to 243 forms a coiled coil; the sequence is TMSMEAKLEAAKKTLEKFKQEAASKRAKRTK. The interval 231–256 is disordered; sequence KQEAASKRAKRTKPSGSKTTRSTGRK. Positions 244-256 are enriched in polar residues; sequence PSGSKTTRSTGRK.

This is an uncharacterized protein from Acanthamoeba polyphaga (Amoeba).